Here is a 205-residue protein sequence, read N- to C-terminus: Small ribosomal subunit protein uS4 (205 aa).

Residues 18 to 49 (NIWGRPKSPVNKREYGPGQHGQRRKGKLSDFG) are disordered. In terms of domain architecture, S4 RNA-binding spans 94-157 (RRLDTVVYRA…KQLALVLEAN (64 aa)).

This sequence belongs to the universal ribosomal protein uS4 family. In terms of assembly, part of the 30S ribosomal subunit. Contacts protein S5. The interaction surface between S4 and S5 is involved in control of translational fidelity.

Functionally, one of the primary rRNA binding proteins, it binds directly to 16S rRNA where it nucleates assembly of the body of the 30S subunit. In terms of biological role, with S5 and S12 plays an important role in translational accuracy. This chain is Small ribosomal subunit protein uS4, found in Nitrobacter winogradskyi (strain ATCC 25391 / DSM 10237 / CIP 104748 / NCIMB 11846 / Nb-255).